A 322-amino-acid chain; its full sequence is Putative integrase ORF3 (322 aa).

Residues 153–322 enclose the Integrase catalytic domain; it reads RGKLTDFKSI…SSKEMFLQNI (170 aa).

The protein belongs to the plectrovirus integrase ORF3 family.

This protein may encode an integrase, which is necessary for integration of the viral DNA into host genome. The sequence is that of Putative integrase ORF3 from Spiroplasma virus SpV1-R8A2 B (SpV1).